Consider the following 111-residue polypeptide: Anti-adapter protein IraM (111 aa).

This sequence belongs to the IraM/RssC family.

It is found in the cytoplasm. In terms of biological role, involved in the stabilization of the sigma stress factor RpoS. The polypeptide is Anti-adapter protein IraM (Cronobacter sakazakii (strain ATCC BAA-894) (Enterobacter sakazakii)).